A 157-amino-acid polypeptide reads, in one-letter code: Phosphopantetheine adenylyltransferase (157 aa).

Residue threonine 8 coordinates substrate. ATP contacts are provided by residues 8-9 (TF) and histidine 16. Lysine 40, threonine 72, and arginine 86 together coordinate substrate. ATP is bound by residues 87–89 (GLR), glutamate 97, and 122–128 (YSFLSSS).

This sequence belongs to the bacterial CoaD family. Homohexamer. It depends on Mg(2+) as a cofactor.

The protein localises to the cytoplasm. It carries out the reaction (R)-4'-phosphopantetheine + ATP + H(+) = 3'-dephospho-CoA + diphosphate. It participates in cofactor biosynthesis; coenzyme A biosynthesis; CoA from (R)-pantothenate: step 4/5. In terms of biological role, reversibly transfers an adenylyl group from ATP to 4'-phosphopantetheine, yielding dephospho-CoA (dPCoA) and pyrophosphate. The sequence is that of Phosphopantetheine adenylyltransferase from Prochlorococcus marinus (strain AS9601).